A 1072-amino-acid polypeptide reads, in one-letter code: MPKYKDISKVLVIGSGPIIIGQAAEFDYSGTQACKSLKEEGVQVVLVNNNPATIMTDTDIADIVYIENPTVEVVEKIIAKERPDGILATLGGQTGLNLAVKLKEAGILDKYNVKLLGTSVESIKTAEDRELFKRKMQEIGEPVAESVTVTNVEDALKFAKNYGYPLIIRPAYTLGGTGGGIAHNDEELISIVDLGLKKSMVGEVLVEKSLYGWKEIEFEVMRDAADNCITICSMENFDPVGVHTGDSIVVAPAQTLSDYEYQMLRSASIKIIRALKIEGGCNIQFALDPQSHKYYVIEVNPRVSRSSALASKATGYPIAKIAAKIAIGLRLDEIKNPVTGKTTAFFEPALDYVVTKIPRWPFDKFYTTDRRIGTQMKATGEVMAIERSFEASLLKAVRSLEIKAYGLRLDSVRGMGTKEILEDISVPNDMRLFYIAEALRRNIDIDYINDVTKIDKWFLNKLSNIVNMEKEIEENELSKEILKKAKRMGFSDREIATIKGIKEEDVRTLRKKYGIYPSYKMVDTCAAEFESITQYIYSTYCEEDEVETHDIPKVIVIGSGPIRIGQGIEFDYCSVKALWALKETGIKSIIINNNPETVSTDFDTGDRLYFEPITLEDVLNIYEKEKPLGVMVMFGGQTAINLTEELVKNEVKILGTSFKSIDISEDREKFSKLLKELNINQPKGGYALTVEDAKDIALKLGFPLLVRPSYVIGGQSMEKVNTLQELIDYVKHATEVSPGKPVLIDKYIDGREVEVDAVSDGECVLIPGIMEHIERTGVHSGDSFSIYPARNLTEREINTIIEYTEKISKALNVKGLINIQFAVKEGTVYVLEVNPRASRTVPIMSKATGVPMVKLAVEVALGKKLKELGYKGGLWPQTPYTVVKAPVFSMEKLTDVEVSLSPEMKSTGEIMGIDLSYEGALYKALEGAGLKIPKKGKILLSIAERDFQEAVSLVEKLQSLGYEIYATYRTGKYFSLMGIHANIMSLDHAIKLLKNGYFDAVVNTPTKGKKPDNAGFKLRRTAVEYRIPLFTSIDTIKAALNAVSKVNVNGLSVLSMNEYQEIQKDNVKNLVL.

Residues 1–401 (MPKYKDISKV…SLLKAVRSLE (401 aa)) are carboxyphosphate synthetic domain. Arginine 129, arginine 169, glycine 175, glycine 176, lysine 208, leucine 210, glutamate 215, glycine 241, valine 242, histidine 243, glutamine 284, and glutamate 298 together coordinate ATP. Residues 133-327 (KRKMQEIGEP…IAKIAAKIAI (195 aa)) enclose the ATP-grasp 1 domain. Mg(2+) contacts are provided by glutamine 284, glutamate 298, and asparagine 300. Residues glutamine 284, glutamate 298, and asparagine 300 each contribute to the Mn(2+) site. The oligomerization domain stretch occupies residues 402–544 (IKAYGLRLDS…YIYSTYCEED (143 aa)). The tract at residues 545-929 (EVETHDIPKV…ALYKALEGAG (385 aa)) is carbamoyl phosphate synthetic domain. The ATP-grasp 2 domain maps to 671–861 (SKLLKELNIN…MVKLAVEVAL (191 aa)). The ATP site is built by arginine 707, lysine 746, isoleucine 748, glutamate 752, glycine 777, valine 778, histidine 779, serine 780, glutamine 820, and glutamate 832. Glutamine 820, glutamate 832, and asparagine 834 together coordinate Mg(2+). Mn(2+)-binding residues include glutamine 820, glutamate 832, and asparagine 834. In terms of domain architecture, MGS-like spans 930 to 1072 (LKIPKKGKIL…QKDNVKNLVL (143 aa)). Positions 930–1072 (LKIPKKGKIL…QKDNVKNLVL (143 aa)) are allosteric domain.

Belongs to the CarB family. Composed of two chains; the small (or glutamine) chain promotes the hydrolysis of glutamine to ammonia, which is used by the large (or ammonia) chain to synthesize carbamoyl phosphate. Tetramer of heterodimers (alpha,beta)4. Mg(2+) serves as cofactor. Mn(2+) is required as a cofactor.

The enzyme catalyses hydrogencarbonate + L-glutamine + 2 ATP + H2O = carbamoyl phosphate + L-glutamate + 2 ADP + phosphate + 2 H(+). It carries out the reaction hydrogencarbonate + NH4(+) + 2 ATP = carbamoyl phosphate + 2 ADP + phosphate + 2 H(+). Its pathway is amino-acid biosynthesis; L-arginine biosynthesis; carbamoyl phosphate from bicarbonate: step 1/1. It participates in pyrimidine metabolism; UMP biosynthesis via de novo pathway; (S)-dihydroorotate from bicarbonate: step 1/3. Functionally, large subunit of the glutamine-dependent carbamoyl phosphate synthetase (CPSase). CPSase catalyzes the formation of carbamoyl phosphate from the ammonia moiety of glutamine, carbonate, and phosphate donated by ATP, constituting the first step of 2 biosynthetic pathways, one leading to arginine and/or urea and the other to pyrimidine nucleotides. The large subunit (synthetase) binds the substrates ammonia (free or transferred from glutamine from the small subunit), hydrogencarbonate and ATP and carries out an ATP-coupled ligase reaction, activating hydrogencarbonate by forming carboxy phosphate which reacts with ammonia to form carbamoyl phosphate. The protein is Carbamoyl phosphate synthase large chain of Caldanaerobacter subterraneus subsp. tengcongensis (strain DSM 15242 / JCM 11007 / NBRC 100824 / MB4) (Thermoanaerobacter tengcongensis).